Reading from the N-terminus, the 624-residue chain is Protein FAM234B (624 aa).

The tract at residues 1-91 is disordered; the sequence is MATVLSRALK…GFPSEPLGGL (91 aa). Residue serine 16 is modified to Phosphoserine. Phosphothreonine is present on threonine 26. A phosphoserine mark is found at serine 30, serine 33, and serine 63. Residues 107-127 traverse the membrane as a helical segment; the sequence is VFLLTLVISMVLVLLCAFLIP.

The protein belongs to the FAM234 family.

It is found in the membrane. The protein resides in the golgi outpost. Its subcellular location is the cytoplasm. The protein localises to the cytoskeleton. It localises to the microtubule organizing center. In Mus musculus (Mouse), this protein is Protein FAM234B.